The following is a 287-amino-acid chain: Phosphatidylserine decarboxylase proenzyme (287 aa).

Active-site charge relay system; for autoendoproteolytic cleavage activity residues include Asp-90, His-147, and Ser-252. Catalysis depends on Ser-252, which acts as the Schiff-base intermediate with substrate; via pyruvic acid; for decarboxylase activity. Ser-252 is subject to Pyruvic acid (Ser); by autocatalysis.

Belongs to the phosphatidylserine decarboxylase family. PSD-B subfamily. Prokaryotic type I sub-subfamily. Heterodimer of a large membrane-associated beta subunit and a small pyruvoyl-containing alpha subunit. Requires pyruvate as cofactor. Is synthesized initially as an inactive proenzyme. Formation of the active enzyme involves a self-maturation process in which the active site pyruvoyl group is generated from an internal serine residue via an autocatalytic post-translational modification. Two non-identical subunits are generated from the proenzyme in this reaction, and the pyruvate is formed at the N-terminus of the alpha chain, which is derived from the carboxyl end of the proenzyme. The autoendoproteolytic cleavage occurs by a canonical serine protease mechanism, in which the side chain hydroxyl group of the serine supplies its oxygen atom to form the C-terminus of the beta chain, while the remainder of the serine residue undergoes an oxidative deamination to produce ammonia and the pyruvoyl prosthetic group on the alpha chain. During this reaction, the Ser that is part of the protease active site of the proenzyme becomes the pyruvoyl prosthetic group, which constitutes an essential element of the active site of the mature decarboxylase.

It localises to the cell membrane. It catalyses the reaction a 1,2-diacyl-sn-glycero-3-phospho-L-serine + H(+) = a 1,2-diacyl-sn-glycero-3-phosphoethanolamine + CO2. Its pathway is phospholipid metabolism; phosphatidylethanolamine biosynthesis; phosphatidylethanolamine from CDP-diacylglycerol: step 2/2. Functionally, catalyzes the formation of phosphatidylethanolamine (PtdEtn) from phosphatidylserine (PtdSer). The polypeptide is Phosphatidylserine decarboxylase proenzyme (Pseudomonas putida (strain ATCC 47054 / DSM 6125 / CFBP 8728 / NCIMB 11950 / KT2440)).